The primary structure comprises 399 residues: S-adenosylmethionine synthase (399 aa).

ATP is bound at residue histidine 17. Aspartate 19 serves as a coordination point for Mg(2+). A K(+)-binding site is contributed by glutamate 52. Positions 65 and 109 each coordinate L-methionine. The interval 109-119 (QSADIAQGVDA) is flexible loop. ATP is bound by residues 177 to 179 (DSK), 243 to 244 (KF), aspartate 252, 258 to 259 (RK), alanine 275, and lysine 279. Aspartate 252 contributes to the L-methionine binding site. Lysine 283 lines the L-methionine pocket.

This sequence belongs to the AdoMet synthase family. In terms of assembly, homotetramer; dimer of dimers. Requires Mg(2+) as cofactor. It depends on K(+) as a cofactor.

It localises to the cytoplasm. It carries out the reaction L-methionine + ATP + H2O = S-adenosyl-L-methionine + phosphate + diphosphate. It participates in amino-acid biosynthesis; S-adenosyl-L-methionine biosynthesis; S-adenosyl-L-methionine from L-methionine: step 1/1. Catalyzes the formation of S-adenosylmethionine (AdoMet) from methionine and ATP. The overall synthetic reaction is composed of two sequential steps, AdoMet formation and the subsequent tripolyphosphate hydrolysis which occurs prior to release of AdoMet from the enzyme. The protein is S-adenosylmethionine synthase of Bradyrhizobium sp. (strain BTAi1 / ATCC BAA-1182).